A 156-amino-acid polypeptide reads, in one-letter code: Ribosomal RNA large subunit methyltransferase H (156 aa).

Residues leucine 73, glycine 104, and 123 to 128 each bind S-adenosyl-L-methionine; that span reads LSPLTL.

It belongs to the RNA methyltransferase RlmH family. Homodimer.

It is found in the cytoplasm. It carries out the reaction pseudouridine(1915) in 23S rRNA + S-adenosyl-L-methionine = N(3)-methylpseudouridine(1915) in 23S rRNA + S-adenosyl-L-homocysteine + H(+). Functionally, specifically methylates the pseudouridine at position 1915 (m3Psi1915) in 23S rRNA. This chain is Ribosomal RNA large subunit methyltransferase H, found in Pectobacterium atrosepticum (strain SCRI 1043 / ATCC BAA-672) (Erwinia carotovora subsp. atroseptica).